We begin with the raw amino-acid sequence, 198 residues long: Transcription factor LBX2 (198 aa).

Disordered stretches follow at residues 24–46 (MVPR…SPLC), 63–89 (ALQP…RKSR), and 173–198 (DPGL…QVDD). A DNA-binding region (homeobox) is located at residues 85 to 144 (RRKSRTAFTAQQVLELERRFVFQKYLAPSERDGLATRLGLANAQVVTWFQNRRAKLKRDV).

Its subcellular location is the nucleus. Functionally, transcription factor. This Homo sapiens (Human) protein is Transcription factor LBX2 (LBX2).